The primary structure comprises 256 residues: POU domain class 2-associating factor 1 (256 aa).

The tract at residues 1-23 (MLWQKPTAPEQAPAPPRPYQGVR) is disordered. The region spanning 16-38 (PRPYQGVRVKEPVKELLRRKRGH) is the OCA domain.

It belongs to the POU2AF family. Interacts with POU2F1/OCT1 and POU2F2/OCT2; the interaction increases POU2F1 and POU2F2 transactivation activity. Post-translationally, ubiquitinated; mediated by SIAH1 or SIAH2 and leading to its subsequent proteasomal degradation.

Its subcellular location is the nucleus. Transcriptional coactivator that specifically associates with either POU2F1/OCT1 or POU2F2/OCT2. It boosts the POU2F1/OCT1 mediated promoter activity and to a lesser extent, that of POU2F2/OCT2. It recognizes the POU domains of POU2F1/OCT1 and POU2F2/OCT2. It is essential for the response of B-cells to antigens and required for the formation of germinal centers. Regulates IL6 expression in B cells as POU2F2/OCT2 coactivator. In Bos taurus (Bovine), this protein is POU domain class 2-associating factor 1 (POU2AF1).